The following is a 156-amino-acid chain: Small ribosomal subunit protein uS7 (156 aa).

This sequence belongs to the universal ribosomal protein uS7 family. Part of the 30S ribosomal subunit. Contacts proteins S9 and S11.

One of the primary rRNA binding proteins, it binds directly to 16S rRNA where it nucleates assembly of the head domain of the 30S subunit. Is located at the subunit interface close to the decoding center, probably blocks exit of the E-site tRNA. In Streptococcus equi subsp. equi (strain 4047), this protein is Small ribosomal subunit protein uS7.